Here is a 1883-residue protein sequence, read N- to C-terminus: Endoribonuclease Dicer homolog 1 (1883 aa).

3 disordered regions span residues 71 to 97 (AESSPAPPPPPPPPLPEPVPVAPPELP), 129 to 188 (ARKE…DDRR), and 221 to 262 (RSGT…EKPV). A compositionally biased stretch (pro residues) spans 75-96 (PAPPPPPPPPLPEPVPVAPPEL). 2 stretches are compositionally biased toward basic and acidic residues: residues 129–138 (ARKEPRRESH) and 228–262 (ESDREAKRARTQDGGSMEKKAEADRMGAAQREKPV). A Helicase ATP-binding domain is found at 274-413 (VLEQAKSRNT…QEDCAIKIRN (140 aa)). An ATP-binding site is contributed by 287–294 (LETGAGKT). Residues 358–361 (DECH) carry the DECH box motif. The interval 577-604 (KSETSDVEMQNTEKHNTNDLEEGELPDS) is disordered. A Helicase C-terminal domain is found at 629–789 (LIKILLKYQH…RTDLSHLDGT (161 aa)). In terms of domain architecture, Dicer dsRNA-binding fold spans 817-912 (AVGLIHFYCS…LPDRGSGEGE (96 aa)). The disordered stretch occupies residues 901–928 (TLLPDRGSGEGEKTEQNDEGEPLPGTAR). Residues 907-916 (GSGEGEKTEQ) are compositionally biased toward basic and acidic residues. Residues 1163-1296 (HFSDYQNQGK…LPPELCLVHP (134 aa)) form the PAZ domain. 2 RNase III domains span residues 1320-1498 (LAVQ…VAGG) and 1538-1686 (FDTL…LDSG). Mg(2+) is bound by residues glutamate 1576, aspartate 1672, and glutamate 1675. DRBM domains lie at 1712 to 1775 (HPVR…VLKE) and 1797 to 1872 (FTRQ…LLNR).

This sequence belongs to the helicase family. Dicer subfamily. May interact with ARGONAUTE1 or PINHEAD through their common PAZ domains. Mg(2+) serves as cofactor. Requires Mn(2+) as cofactor.

It is found in the nucleus. Its function is as follows. Involved in the RNA silencing pathway. Cleaves double-stranded RNA to produce microRNAs (miRNAs) of 21-24 nucleotides which target the selective destruction of complementary RNAs. Regulates by this way the development of the plant. May not be involved in small interfering RNAs (siRNAs) production. The protein is Endoribonuclease Dicer homolog 1 (DCL1) of Oryza sativa subsp. japonica (Rice).